The following is a 279-amino-acid chain: Movement protein (279 aa).

This sequence belongs to the cucumovirus movement protein family.

It is found in the host cell junction. It localises to the host plasmodesma. Functionally, transports viral genome to neighboring plant cells directly through plasmosdesmata, without any budding. The movement protein allows efficient cell to cell propagation, by bypassing the host cell wall barrier. Acts by forming a tubular structure at the host plasmodesmata, enlarging it enough to allow free passage of virion capsids. This is Movement protein from Cucumber mosaic virus (strain As) (CMV).